The sequence spans 205 residues: Ribosomal RNA small subunit methyltransferase G (205 aa).

S-adenosyl-L-methionine contacts are provided by residues Gly-76, Leu-81, 127–128, and Arg-140; that span reads IE.

It belongs to the methyltransferase superfamily. RNA methyltransferase RsmG family.

It localises to the cytoplasm. It carries out the reaction guanosine(527) in 16S rRNA + S-adenosyl-L-methionine = N(7)-methylguanosine(527) in 16S rRNA + S-adenosyl-L-homocysteine. Functionally, specifically methylates the N7 position of guanine in position 527 of 16S rRNA. The sequence is that of Ribosomal RNA small subunit methyltransferase G from Francisella tularensis subsp. holarctica (strain FTNF002-00 / FTA).